The primary structure comprises 361 residues: Peptide chain release factor 1 (361 aa).

At Gln238 the chain carries N5-methylglutamine.

It belongs to the prokaryotic/mitochondrial release factor family. Methylated by PrmC. Methylation increases the termination efficiency of RF1.

Its subcellular location is the cytoplasm. Peptide chain release factor 1 directs the termination of translation in response to the peptide chain termination codons UAG and UAA. The polypeptide is Peptide chain release factor 1 (Mesomycoplasma hyopneumoniae (strain 232) (Mycoplasma hyopneumoniae)).